Reading from the N-terminus, the 416-residue chain is Glutamyl-tRNA reductase (416 aa).

Substrate-binding positions include 49 to 52 (TCNR), serine 105, 110 to 112 (EPQ), and glutamine 116. The active-site Nucleophile is cysteine 50. 185-190 (GAGETI) lines the NADP(+) pocket.

This sequence belongs to the glutamyl-tRNA reductase family. Homodimer.

It carries out the reaction (S)-4-amino-5-oxopentanoate + tRNA(Glu) + NADP(+) = L-glutamyl-tRNA(Glu) + NADPH + H(+). It functions in the pathway porphyrin-containing compound metabolism; protoporphyrin-IX biosynthesis; 5-aminolevulinate from L-glutamyl-tRNA(Glu): step 1/2. In terms of biological role, catalyzes the NADPH-dependent reduction of glutamyl-tRNA(Glu) to glutamate 1-semialdehyde (GSA). The polypeptide is Glutamyl-tRNA reductase (Shewanella frigidimarina (strain NCIMB 400)).